The sequence spans 346 residues: High mobility group protein 20A (346 aa).

2 stretches are compositionally biased toward polar residues: residues 1–10 (MESLMASSTL) and 55–65 (SQGQLLQSEAS). Disordered regions lie at residues 1 to 112 (MESL…YVRF) and 178 to 210 (FSRK…TEVK). A compositionally biased stretch (basic and acidic residues) spans 71–81 (NEQRPEDEQRS). A compositionally biased stretch (basic residues) spans 82–95 (KRGGWSKGRKRKKP). Positions 102-170 (PKSPLTGYVR…RYMKELEQYQ (69 aa)) form a DNA-binding region, HMG box. Phosphoserine is present on serine 104. Residues 181–210 (KTQDRQKGKSHRQDAARQATHDHEKETEVK) are compositionally biased toward basic and acidic residues. Positions 228–272 (SKAREAELRQLRKSNMEFEERNAALQKHVESMRTAVEKLEVDVIQ) form a coiled coil.

Interacts with DTNB. As to expression, expressed in brain. Detected in mature neurons.

Its subcellular location is the nucleus. Plays a role in neuronal differentiation as chromatin-associated protein. Acts as inhibitor of HMG20B. Overcomes the repressive effects of the neuronal silencer REST and induces the activation of neuronal-specific genes. Involved in the recruitment of the histone methyltransferase KMT2A/MLL1 and consequent increased methylation of histone H3 lysine 4. The polypeptide is High mobility group protein 20A (Hmg20a) (Mus musculus (Mouse)).